Consider the following 679-residue polypeptide: Acetyl-coenzyme A synthetase 2 (679 aa).

The tract at residues 1 to 32 (MTSSPTHQVVHEANNIKKQETPKEFFERQPRQ) is disordered. Over residues 14–30 (NNIKKQETPKEFFERQP) the composition is skewed to basic and acidic residues. CoA is bound by residues 207–210 (RGGK) and T326. Residues 402-404 (GEP), 426-431 (DTYWQT), D517, and R532 contribute to the ATP site. S540 contributes to the CoA binding site. R543 is an ATP binding site. R611 contacts CoA.

This sequence belongs to the ATP-dependent AMP-binding enzyme family.

It catalyses the reaction acetate + ATP + CoA = acetyl-CoA + AMP + diphosphate. This is Acetyl-coenzyme A synthetase 2 (ACS2) from Debaryomyces hansenii (strain ATCC 36239 / CBS 767 / BCRC 21394 / JCM 1990 / NBRC 0083 / IGC 2968) (Yeast).